The chain runs to 327 residues: Movement protein (327 aa).

A coiled-coil region spans residues 252–311 (DLTREEREKAAQLEMLRKTREVHTQRSAEEMKRRQAELAKDTQRKLAEEAKAVTEKRKNM). 2 disordered regions span residues 271–294 (REVHTQRSAEEMKRRQAELAKDTQ) and 307–327 (KRKNMAGVNSSNIKFGNFDSV). Polar residues predominate over residues 313 to 327 (GVNSSNIKFGNFDSV).

The protein localises to the host cell wall. It localises to the host cytoplasm. Functionally, transports viral genome to neighboring plant cells directly through plasmosdesmata, without any budding. The movement protein allows efficient cell to cell propagation, by bypassing the host cell wall barrier. This is Movement protein from Hordeum vulgare (Barley).